Here is a 90-residue protein sequence, read N- to C-terminus: Probable Fe(2+)-trafficking protein (90 aa).

This sequence belongs to the Fe(2+)-trafficking protein family.

Could be a mediator in iron transactions between iron acquisition and iron-requiring processes, such as synthesis and/or repair of Fe-S clusters in biosynthetic enzymes. This Azoarcus sp. (strain BH72) protein is Probable Fe(2+)-trafficking protein.